Reading from the N-terminus, the 264-residue chain is Ribosomal protein L11 methyltransferase (264 aa).

4 residues coordinate S-adenosyl-L-methionine: T116, G137, D159, and N200.

This sequence belongs to the methyltransferase superfamily. PrmA family.

It is found in the cytoplasm. It carries out the reaction L-lysyl-[protein] + 3 S-adenosyl-L-methionine = N(6),N(6),N(6)-trimethyl-L-lysyl-[protein] + 3 S-adenosyl-L-homocysteine + 3 H(+). Functionally, methylates ribosomal protein L11. The chain is Ribosomal protein L11 methyltransferase from Thermotoga neapolitana.